Here is a 357-residue protein sequence, read N- to C-terminus: Phosphoribosylformylglycinamidine cyclo-ligase (357 aa).

The protein belongs to the AIR synthase family.

It is found in the cytoplasm. It carries out the reaction 2-formamido-N(1)-(5-O-phospho-beta-D-ribosyl)acetamidine + ATP = 5-amino-1-(5-phospho-beta-D-ribosyl)imidazole + ADP + phosphate + H(+). Its pathway is purine metabolism; IMP biosynthesis via de novo pathway; 5-amino-1-(5-phospho-D-ribosyl)imidazole from N(2)-formyl-N(1)-(5-phospho-D-ribosyl)glycinamide: step 2/2. The chain is Phosphoribosylformylglycinamidine cyclo-ligase from Rhizobium etli (strain CIAT 652).